We begin with the raw amino-acid sequence, 304 residues long: MPINVPSGLPAVKVLAKEGIFVMTEKRAIHQDIRPLEILILNLMPDKIKTEIQLLRLLGNTPLQVNVTLLYTETHKPKHTPIEHILKFYTTFSAVKDRKFDGFIITGAPVELLPFEEVDYWEELTEIMEWSRHNVYSTMFICWAAQAGLYYFYGIPKYELPQKLSGVYKHRVAKDSVLFRGHDDFFWAPHSRYTEVKKEDIDKVPELEILAESDEAGVYVVANKSERQIFVTGHPEYDRYTLRDEYYRDIGRNLKVPIPANYFPNDDPTKTPILTWWSHAHLFFSNWLNYCIYQKTPYRLEDIH.

The Acyl-thioester intermediate role is filled by Cys-142. Positions 163 and 191 each coordinate substrate. The active-site Proton acceptor is His-234. Glu-236 is an active-site residue. Arg-248 contacts substrate.

Belongs to the MetA family.

The protein localises to the cytoplasm. It carries out the reaction L-homoserine + acetyl-CoA = O-acetyl-L-homoserine + CoA. Its pathway is amino-acid biosynthesis; L-methionine biosynthesis via de novo pathway; O-acetyl-L-homoserine from L-homoserine: step 1/1. Its function is as follows. Transfers an acetyl group from acetyl-CoA to L-homoserine, forming acetyl-L-homoserine. This chain is Homoserine O-acetyltransferase, found in Thermotoga petrophila (strain ATCC BAA-488 / DSM 13995 / JCM 10881 / RKU-1).